Here is a 263-residue protein sequence, read N- to C-terminus: Eukaryotic translation initiation factor 3 subunit J-B (263 aa).

Residues 1–13 are compositionally biased toward low complexity; the sequence is MAAAAAAAAAAAA. The segment at 1–115 is disordered; sequence MAAAAAAAAA…EPEESKVLTP (115 aa). The residue at position 2 (Ala-2) is an N-acetylalanine. Residues 6 to 74 are sufficient for interaction with EIF3B; the sequence is AAAAAAAAGD…KEEAEVKPEV (69 aa). Phosphoserine is present on residues Ser-16, Ser-18, and Ser-25. Over residues 45–66 the composition is skewed to acidic residues; sequence EGEDEDEDVKDNWDDDDDENKE. The segment covering 67–111 has biased composition (basic and acidic residues); the sequence is EAEVKPEVKISEKKKIAEKIKEKERQQKKRQEEIKKRLEEPEESK. A coiled-coil region spans residues 75 to 140; that stretch reads KISEKKKIAE…ESDLELAKET (66 aa). Lys-111 participates in a covalent cross-link: Glycyl lysine isopeptide (Lys-Gly) (interchain with G-Cter in SUMO2). At Thr-114 the chain carries Phosphothreonine. A Phosphoserine modification is found at Ser-132. The tract at residues 248–263 is promotes stable association with the 40S ribosome; the sequence is YGGYEGGYVQDYEDFM. Tyr-259 carries the phosphotyrosine modification.

It belongs to the eIF-3 subunit J family. In terms of assembly, component of the eukaryotic translation initiation factor 3 (eIF-3) complex, which is composed of 13 subunits: EIF3A, EIF3B, EIF3C, EIF3D, EIF3E, EIF3F, EIF3G, EIF3H, EIF3I, EIF3J, EIF3K, EIF3L and EIF3M. The eIF-3 complex appears to include 3 stable modules: module A is composed of EIF3A, EIF3B, EIF3G and EIF3I; module B is composed of EIF3F, EIF3H, and EIF3M; and module C is composed of EIF3C, EIF3D, EIF3E, EIF3K and EIF3L. EIF3C of module C binds EIF3B of module A and EIF3H of module B, thereby linking the three modules. EIF3J is a labile subunit that binds to the eIF-3 complex via EIF3B. The eIF-3 complex interacts with RPS6KB1 under conditions of nutrient depletion. Mitogenic stimulation leads to binding and activation of a complex composed of MTOR and RPTOR, leading to phosphorylation and release of RPS6KB1 and binding of EIF4B to eIF-3. In terms of processing, phosphorylated. Phosphorylation is enhanced upon serum stimulation.

The protein localises to the cytoplasm. Functionally, component of the eukaryotic translation initiation factor 3 (eIF-3) complex, which is required for several steps in the initiation of protein synthesis. The eIF-3 complex associates with the 40S ribosome and facilitates the recruitment of eIF-1, eIF-1A, eIF-2:GTP:methionyl-tRNAi and eIF-5 to form the 43S pre-initiation complex (43S PIC). The eIF-3 complex stimulates mRNA recruitment to the 43S PIC and scanning of the mRNA for AUG recognition. The eIF-3 complex is also required for disassembly and recycling of post-termination ribosomal complexes and subsequently prevents premature joining of the 40S and 60S ribosomal subunits prior to initiation. The eIF-3 complex specifically targets and initiates translation of a subset of mRNAs involved in cell proliferation, including cell cycling, differentiation and apoptosis, and uses different modes of RNA stem-loop binding to exert either translational activation or repression. This subunit binds directly within the mRNA entry channel of the 40S ribosome to the aminoacyl (A) site. It may regulate the interaction between the 43S PIC and mRNA. This Mus musculus (Mouse) protein is Eukaryotic translation initiation factor 3 subunit J-B (Eif3j2).